Here is a 725-residue protein sequence, read N- to C-terminus: Glyoxysomal fatty acid beta-oxidation multifunctional protein MFP-a (725 aa).

This sequence in the N-terminal section; belongs to the enoyl-CoA hydratase/isomerase family. The protein in the central section; belongs to the 3-hydroxyacyl-CoA dehydrogenase family.

It localises to the glyoxysome. It carries out the reaction a (3S)-3-hydroxyacyl-CoA = a (2E)-enoyl-CoA + H2O. It catalyses the reaction a 4-saturated-(3S)-3-hydroxyacyl-CoA = a (3E)-enoyl-CoA + H2O. The enzyme catalyses a (3Z)-enoyl-CoA = a 4-saturated (2E)-enoyl-CoA. The catalysed reaction is a (3E)-enoyl-CoA = a 4-saturated (2E)-enoyl-CoA. It carries out the reaction (3S)-3-hydroxybutanoyl-CoA = (3R)-3-hydroxybutanoyl-CoA. It catalyses the reaction a (3S)-3-hydroxyacyl-CoA + NAD(+) = a 3-oxoacyl-CoA + NADH + H(+). Its pathway is lipid metabolism; fatty acid beta-oxidation. The protein is Glyoxysomal fatty acid beta-oxidation multifunctional protein MFP-a of Cucumis sativus (Cucumber).